The primary structure comprises 261 residues: Zinc import ATP-binding protein ZnuC (261 aa).

The ABC transporter domain occupies 6-227 (IQLNNIHLRF…PEYLKLFGKQ (222 aa)). Residue 38-45 (GPNGAGKS) coordinates ATP.

The protein belongs to the ABC transporter superfamily. Zinc importer (TC 3.A.1.15.5) family. In terms of assembly, the complex is composed of two ATP-binding proteins (ZnuC), two transmembrane proteins (ZnuB) and a solute-binding protein (ZnuA).

It localises to the cell inner membrane. It carries out the reaction Zn(2+)(out) + ATP(in) + H2O(in) = Zn(2+)(in) + ADP(in) + phosphate(in) + H(+)(in). Part of the ABC transporter complex ZnuABC involved in zinc import. Responsible for energy coupling to the transport system. This chain is Zinc import ATP-binding protein ZnuC, found in Saccharophagus degradans (strain 2-40 / ATCC 43961 / DSM 17024).